Here is a 286-residue protein sequence, read N- to C-terminus: L-cysteine S-thiosulfotransferase subunit SoxA (286 aa).

The signal sequence occupies residues methionine 1–alanine 28. Cysteine 106 and cysteine 137 are oxidised to a cystine. Positions aspartate 180–lysine 286 constitute a Cytochrome c domain. Positions 200 and 204 each coordinate heme. Arginine 243 contacts substrate. Heme is bound at residue cysteine 247. Cysteine 247 (cysteine persulfide intermediate) is an active-site residue.

It belongs to the SoxA family. Heterodimer of SoxA and SoxX. The SoxAX complex interacts with CT1020, SoxAX-binding protein SaxB (SoxK); this interaction stimulates catalytic activity of the complex. Requires heme as cofactor. Post-translationally, cysteine persulfide at Cys-247.

Its subcellular location is the periplasm. The catalysed reaction is L-cysteinyl-[SoxY protein] + thiosulfate + 2 Fe(III)-[cytochrome c] = S-sulfosulfanyl-L-cysteinyl-[SoxY protein] + 2 Fe(II)-[cytochrome c] + 2 H(+). It carries out the reaction S-sulfanyl-L-cysteinyl-[SoxY protein] + thiosulfate + 2 Fe(III)-[cytochrome c] = S-(2-sulfodisulfanyl)-L-cysteinyl-[SoxY protein] + 2 Fe(II)-[cytochrome c] + 2 H(+). Its function is as follows. C-type monoheme cytochrome, which is part of the SoxAX cytochrome complex involved in sulfur oxidation. The SoxAX complex catalyzes the formation of a heterodisulfide bond between the conserved cysteine residue on a sulfur carrier SoxYZ complex subunit SoxY and thiosulfate or other inorganic sulfur substrates. This leads to the liberation of two electrons, which may be transferred from the SoxAX complex to another cytochrome c and which then may be used for reductive CO(2) fixation. The sequence is that of L-cysteine S-thiosulfotransferase subunit SoxA from Chlorobaculum thiosulfatiphilum (Chlorobium limicola f.sp. thiosulfatophilum).